The chain runs to 82 residues: Myrmicitoxin(1)-Pm3a (82 aa).

A signal peptide spans 1-23 (MEIPKLLYIAVIAIGLSGSLTCA). Residues 24–59 (TPLANPLADPEAEAEAKATAEATAEAIAEALAEPEP) constitute a propeptide that is removed on maturation. L81 carries the leucine amide modification.

It belongs to the formicidae venom clade 1 family. As to expression, expressed by the venom gland.

It localises to the secreted. In terms of biological role, toxin that causes a slowly developing temporary paralysis when intrathoracically injected into insects (blowflies). Does not cause spontaneous nocifensive behaviors by intraplantar injection in mice. The polypeptide is Myrmicitoxin(1)-Pm3a (Pogonomyrmex maricopa (Maricopa harvester ant)).